We begin with the raw amino-acid sequence, 435 residues long: Serine/threonine-protein kinase 40 (435 aa).

Residues Phe-35–Ile-332 form the Protein kinase domain. ATP is bound by residues Leu-41 to Ile-49 and Lys-66. Asp-197 acts as the Proton acceptor in catalysis.

It belongs to the protein kinase superfamily. CAMK Ser/Thr protein kinase family.

The protein localises to the nucleus. Its subcellular location is the cytoplasm. It carries out the reaction L-seryl-[protein] + ATP = O-phospho-L-seryl-[protein] + ADP + H(+). The enzyme catalyses L-threonyl-[protein] + ATP = O-phospho-L-threonyl-[protein] + ADP + H(+). Functionally, may be a negative regulator of NF-kappa-B and p53-mediated gene transcription. The chain is Serine/threonine-protein kinase 40 (Stk40) from Rattus norvegicus (Rat).